Consider the following 708-residue polypeptide: Caprin-1 (708 aa).

Composition is skewed to low complexity over residues 1–15 and 22–37; these read MPSATSHSGSGSKSS and GSSGNEAGAGAAAPAS. Positions 1-48 are disordered; it reads MPSATSHSGSGSKSSGPPPPSGSSGNEAGAGAAAPASQHPMTGTGAVQ. An N-acetylproline modification is found at Pro2. Position 10 is a phosphoserine (Ser10). Positions 58 to 92 form a coiled coil; the sequence is VIDKKLRNLEKKKGKLDDYQERMNKGERLNQDQLD. Phosphoserine is present on Ser113. A coiled-coil region spans residues 123-151; the sequence is KTIKKTARREQLMREEAEQKRLKTVLELQ. Arg163 is subject to Omega-N-methylarginine. The segment at 258–287 is disordered; that stretch reads EEAASAPTVEDQAAEAEPEPVEEYTEQNEV. The span at 269–287 shows a compositional bias: acidic residues; it reads QAAEAEPEPVEEYTEQNEV. Phosphoserine occurs at positions 333 and 341. The G3BP1-binding stretch occupies residues 358–379; that stretch reads QDLMAQMQGPYNFIQDSMLDFE. Residues 415-452 are compositionally biased toward polar residues; sequence LAQPNQVSVQPEATQVPLVSSTSEGYTASQPLYQPSHA. 4 disordered regions span residues 415 to 459, 473 to 497, 521 to 559, and 571 to 708; these read LAQP…RPQK, TDQTTASSSLPAASQPQVFQAGTSK, NAPVPPVNEPETLKQQNQYQASYNQSFSSQPHQVEQTEL, and YHGS…QQVN. 2 stretches are compositionally biased toward low complexity: residues 475-489 and 535-559; these read QTTASSSLPAASQPQ and QQNQYQASYNQSFSSQPHQVEQTEL. Positions 572–603 are enriched in polar residues; sequence HGSQDQPHQVTGNHQQPPQQNTGFPRSNQPYY. Tyr623 carries the phosphotyrosine modification. 2 positions are modified to omega-N-methylarginine: Arg624 and Arg631. Phosphotyrosine is present on residues Tyr634 and Tyr637. Arg638 carries the post-translational modification Omega-N-methylarginine. Over residues 640–656 the composition is skewed to polar residues; it reads SFSTNTPNSGYTQSQFS. O-linked (GlcNAc) serine glycosylation is found at Ser642 and Ser648. Residues Tyr650, Tyr661, Tyr664, and Tyr669 each carry the phosphotyrosine modification. Composition is skewed to low complexity over residues 675–685 and 696–708; these read RGSGQSGPRGA and NRGMPQMNTQQVN. Arg697 is subject to Asymmetric dimethylarginine; alternate. Arg697 is subject to Omega-N-methylarginine; alternate.

This sequence belongs to the caprin family. As to quaternary structure, may form homomultimers. Interacts with G3BP1; interaction is direct and promotes stress granule formation. Interacts with G3BP2; interaction is direct and promotes stress granule formation. Interacts with PQBP1. Interacts with DDX3X. Interacts (when phosphorylated by EPHA4) with FMR1; interaction with FMR1 promotes formation of a membraneless compartment. Tyrosine phosphorylation by EPHA4 promotes interaction with FMR1 and liquid-liquid phase separation (LLPS) for the formation of a membraneless compartment that concentrates mRNAs with associated regulatory factors. In terms of processing, O-glycosylated (O-GlcNAcylated), in a cell cycle-dependent manner. O-glycosylation by OGT inhibit ability to undergo liquid-liquid phase separation (LLPS).

The protein localises to the cytoplasm. Its subcellular location is the cytoplasmic ribonucleoprotein granule. The protein resides in the cytosol. It is found in the cell projection. It localises to the dendrite. The protein localises to the lamellipodium. With respect to regulation, ability to mediate liquid-liquid phase separation is regulated by ATP: moderate concentrations of ATP enhance phase separation, whereas high concentrations of ATP lead to inhibition of phase separation. In terms of biological role, mRNA-binding protein that acts as a regulator of mRNAs transport, translation and/or stability, and which is involved in neurogenesis, synaptic plasticity in neurons and cell proliferation and migration in multiple cell types. Plays an essential role in cytoplasmic stress granule formation. Acts as an mRNA regulator by mediating formation of some phase-separated membraneless compartment: undergoes liquid-liquid phase separation upon binding to target mRNAs, leading to assemble mRNAs into cytoplasmic ribonucleoprotein granules that concentrate mRNAs with associated regulatory factors. Undergoes liquid-liquid phase separation following phosphorylation and interaction with FMR1, promoting formation of cytoplasmic ribonucleoprotein granules that concentrate mRNAs with factors that inhibit translation and mediate deadenylation of target mRNAs. In these cytoplasmic ribonucleoprotein granules, CAPRIN1 mediates recruitment of CNOT7 deadenylase, leading to mRNA deadenylation and degradation. Binds directly and selectively to MYC and CCND2 mRNAs. In neuronal cells, directly binds to several mRNAs associated with RNA granules, including BDNF, CAMK2A, CREB1, MAP2, NTRK2 mRNAs, as well as to GRIN1 and KPNB1 mRNAs, but not to rRNAs. This Bos taurus (Bovine) protein is Caprin-1 (CAPRIN1).